A 141-amino-acid chain; its full sequence is Sperm-associated microtubule inner protein 10 (141 aa).

A compositionally biased stretch (basic and acidic residues) spans 1 to 16 (MASEKDDGPALPKLDD). The disordered stretch occupies residues 1–33 (MASEKDDGPALPKLDDDNQTAENTCKPAEEQPQ).

As to quaternary structure, microtubule inner protein component of sperm flagellar doublet microtubules. As to expression, expressed predominantly in the testis.

It localises to the cytoplasm. It is found in the cytoskeleton. Its subcellular location is the flagellum axoneme. Microtubule inner protein (MIP) part of the dynein-decorated doublet microtubules (DMTs) in flagellum axoneme, which is required for flagellum beating. May serve to reinforce and thus stabilize the microtubule structure in the sperm flagella. Involved in the regulation of sperm motility. This is Sperm-associated microtubule inner protein 10 (Spmip10) from Mus musculus (Mouse).